Here is a 206-residue protein sequence, read N- to C-terminus: uncharacterized protein (206 aa).

Disordered regions lie at residues 38–88 (RLQQ…NKNA) and 160–206 (HQNT…SVQE). Over residues 40–73 (QQQQQQQQQQQQNRTASSLQQPQQQQPISPPLFL) the composition is skewed to low complexity. The residue at position 68 (Ser-68) is a Phosphoserine. The segment covering 78-88 (TSENSNLNKNA) has biased composition (polar residues). The span at 165–186 (SSSNPGSMSSSPPNSASSIFNS) shows a compositional bias: low complexity. The span at 192–206 (PYTSQSFNPLESVQE) shows a compositional bias: polar residues.

It is found in the cytoplasm. This is an uncharacterized protein from Saccharomyces cerevisiae (strain ATCC 204508 / S288c) (Baker's yeast).